The sequence spans 748 residues: Transducin-like enhancer protein 4 (748 aa).

Disordered stretches follow at residues 1–20 (MIRD…PHQP) and 157–332 (LPIK…DPLA). Positions 1–112 (MIRDLSKMYR…SQEQQQLQAQ (112 aa)) are q domain. A GP domain region spans residues 113-179 (HLLTWTWSAC…HQRDRDSIKS (67 aa)). The span at 158-177 (PIKDEKKHHDNDHQRDRDSI) shows a compositional bias: basic and acidic residues. The segment covering 178-189 (KSSSVSPSASFR) has biased composition (low complexity). Residues 180-249 (SSVSPSASFR…SPRGSPAHSP (70 aa)) form a ccN domain region. Phosphoserine is present on residues Ser-183, Ser-187, Ser-191, and Ser-197. A compositionally biased stretch (basic and acidic residues) spans 190–227 (GSEKHRNSTDYSSESKKQKTEEKEIAARYDSDGEKSDD). Lys-212 is modified (N6-acetyllysine). Ser-220 bears the Phosphoserine mark. Residue Ser-225 is modified to Phosphoserine; by CK2. Position 240 is a phosphoserine; by CDK1 (Ser-240). Phosphoserine is present on residues Ser-244 and Ser-248. Residues 248 to 264 (SPRENGLDKTRLLKKDA) show a composition bias toward basic and acidic residues. The SP domain stretch occupies residues 250–427 (RENGLDKTRL…PGGKPAYSFH (178 aa)). Lys-256 carries the N6-acetyllysine modification. Low complexity predominate over residues 265 to 280 (PISPASVASSSSTPSS). At Ser-267 the chain carries Phosphoserine. Positions 292-303 (TTPVSKSNTPTP) are enriched in polar residues. Thr-293 bears the Phosphothreonine mark. Phosphoserine is present on residues Ser-296 and Ser-298. A phosphothreonine mark is found at Thr-300, Thr-302, Thr-309, and Thr-315. Ser-394 is subject to Phosphoserine. WD repeat units follow at residues 460 to 498 (NHGE…NKSP), 506 to 545 (NRDN…PRIK), 550 to 589 (SSAP…LVRQ), 592 to 631 (GHTD…QLQQ), 633 to 672 (DFTS…KYQL), 674 to 713 (LHES…SIFQ), and 715 to 748 (KESS…EVIY).

Belongs to the WD repeat Groucho/TLE family. Homooligomer and heterooligomer with other family members. Binds PAX5, LEF1, TCF7, TCF7L1 and TCF7L2. Interacts with ZNF703; TLE4 may mediate ZNF703 transcriptional repression. Interacts with SIX3 and SIX6. Interacts with PAX2. Post-translationally, phosphorylated. PAX5 binding increases phosphorylation. In terms of processing, ubiquitinated by XIAP/BIRC4.

Its subcellular location is the nucleus. Its function is as follows. Transcriptional corepressor that binds to a number of transcription factors. Inhibits the transcriptional activation mediated by PAX5, and by CTNNB1 and TCF family members in Wnt signaling. The effects of full-length TLE family members may be modulated by association with dominant-negative AES. Essential for the transcriptional repressor activity of SIX3 during retina and lens development and for SIX3 transcriptional auto-repression. Involved in transcriptional repression of GNRHR and enhances MSX1-mediated transcriptional repression of CGA/alpha-GSU. This is Transducin-like enhancer protein 4 (Tle4) from Rattus norvegicus (Rat).